Reading from the N-terminus, the 570-residue chain is MTKARDQTHQEGCCGSLANYLTSAKFLLYLGHSLSTWGDRMWHFAVSVFLVELYGNSLLLTAVYGLVVAGSVLVLGAIIGDWVDKNARLKVAQTSLVVQNVSVILCGIILMMVFLHKNELLTMYHGWVLTVCYILIITIANIANLASTATAITIQRDWIVVVAGENRSRLADMNATIRRIDQLTNILAPMAVGQIMTFGSPVIGCGFISGWNLVSMCVEYFLLWKVYQKTPALAVKAALKVEESELKQLTSPKDTEPKPLEGTHLMGEKDSNIRELECEQEPTCASQMAEPFRTFRDGWVSYYNQPVFLAGMGLAFLYMTVLGFDCITTGYAYTQGLSGSILSILMGASAITGIMGTVAFTWLRRKCGLVRTGLFSGLAQLSCLILCVISVFMPGSPLDLSVSPFEDIRSRFVNVEPVSPTTKIPETVFTTEMHMSNMSNVHEMSTKPIPIVSVSLLFAGVIAARIGLWSFDLTVTQLLQENVIESERGIINGVQNSMNYLLDLLHFIMVILAPNPEAFGLLVLISVSFVAMGHLMYFRFAQKTLGNQIFVCGPDEKEVTDENQPNTSVV.

Residues 1–23 (MTKARDQTHQEGCCGSLANYLTS) lie on the Cytoplasmic side of the membrane. The chain crosses the membrane as a helical span at residues 24 to 53 (AKFLLYLGHSLSTWGDRMWHFAVSVFLVEL). Fe cation contacts are provided by Asp-39 and His-43. Residues 54–57 (YGNS) are Extracellular-facing. The helical transmembrane segment at 58 to 84 (LLLTAVYGLVVAGSVLVLGAIIGDWVD) threads the bilayer. At 85–87 (KNA) the chain is on the cytoplasmic side. A helical transmembrane segment spans residues 88-118 (RLKVAQTSLVVQNVSVILCGIILMMVFLHKN). At 119–126 (ELLTMYHG) the chain is on the extracellular side. The chain crosses the membrane as a helical span at residues 127–162 (WVLTVCYILIITIANIANLASTATAITIQRDWIVVV). Residues 163 to 164 (AG) lie on the Cytoplasmic side of the membrane. A helical transmembrane segment spans residues 165-195 (ENRSRLADMNATIRRIDQLTNILAPMAVGQI). Residues 196–202 (MTFGSPV) lie on the Extracellular side of the membrane. A helical membrane pass occupies residues 203 to 229 (IGCGFISGWNLVSMCVEYFLLWKVYQK). At 230 to 306 (TPALAVKAAL…DGWVSYYNQP (77 aa)) the chain is on the cytoplasmic side. The chain crosses the membrane as a helical span at residues 307 to 333 (VFLAGMGLAFLYMTVLGFDCITTGYAY). Residue Cys-326 participates in Fe cation binding. Topologically, residues 334–338 (TQGLS) are extracellular. The chain crosses the membrane as a helical span at residues 339–366 (GSILSILMGASAITGIMGTVAFTWLRRK). The Cytoplasmic portion of the chain corresponds to 367 to 368 (CG). A helical membrane pass occupies residues 369-391 (LVRTGLFSGLAQLSCLILCVISV). Topologically, residues 392 to 452 (FMPGSPLDLS…EMSTKPIPIV (61 aa)) are extracellular. N-linked (GlcNAc...) asparagine glycosylation is present at Asn-437. Residues 453–482 (SVSLLFAGVIAARIGLWSFDLTVTQLLQEN) form a helical membrane-spanning segment. Residues 483–487 (VIESE) are Cytoplasmic-facing. The helical transmembrane segment at 488–512 (RGIINGVQNSMNYLLDLLHFIMVIL) threads the bilayer. His-506 contacts Fe cation. The Extracellular portion of the chain corresponds to 513-515 (APN). The helical transmembrane segment at 516–541 (PEAFGLLVLISVSFVAMGHLMYFRFA) threads the bilayer. The Cytoplasmic portion of the chain corresponds to 542–570 (QKTLGNQIFVCGPDEKEVTDENQPNTSVV).

The protein belongs to the ferroportin (FP) (TC 2.A.100) family. SLC40A subfamily. As to quaternary structure, identified in a complex with STOM. Interacts with HAMP; affinity of the peptide hormone HAMP for SLC40A1 increases by 80-fold in the presence of iron and the interaction promotes SLC40A1 ubiquitination and degradation. Part of a complex composed of SLC40A1/ferroportin, TF/transferrin and HEPH/hephaestin that transfers iron from cells to transferrin. In terms of processing, polyubiquitinated by RNF217; leading to proteasomal degradation. Under conditions of high systemic iron levels, both the hormone peptide hepcidin/HAMP and holo(iron bound)-transferrin/TF induce the ubiquitination, internalization and proteasomal degradation of SLC40A1 to control iron release from cells. High expression in spleen, liver, kidney, heart and duodenum.

The protein localises to the cell membrane. The protein resides in the basolateral cell membrane. The catalysed reaction is Fe(2+)(in) = Fe(2+)(out). Its function is as follows. Transports Fe(2+) from the inside of a cell to the outside of the cell, playing a key role for maintaining systemic iron homeostasis. Transports iron from intestinal, splenic, hepatic cells, macrophages and erythrocytes into the blood to provide iron to other tissues. Controls therefore dietary iron uptake, iron recycling by macrophages and erythrocytes, and release of iron stores in hepatocytes. When iron is in excess in serum, circulating HAMP/hepcidin levels increase resulting in a degradation of SLC40A1, thus limiting the iron efflux to plasma. This Mus musculus (Mouse) protein is Ferroportin.